The following is a 129-amino-acid chain: Small ribosomal subunit protein uS11 (129 aa).

The protein belongs to the universal ribosomal protein uS11 family. In terms of assembly, part of the 30S ribosomal subunit. Interacts with proteins S7 and S18. Binds to IF-3.

Located on the platform of the 30S subunit, it bridges several disparate RNA helices of the 16S rRNA. Forms part of the Shine-Dalgarno cleft in the 70S ribosome. This Haemophilus ducreyi (strain 35000HP / ATCC 700724) protein is Small ribosomal subunit protein uS11.